The sequence spans 138 residues: Cysteine desulfuration protein SufE (138 aa).

The Cysteine persulfide intermediate role is filled by Cys-51.

It belongs to the SufE family. In terms of assembly, homodimer. Interacts with SufS.

The protein resides in the cytoplasm. It functions in the pathway cofactor biosynthesis; iron-sulfur cluster biosynthesis. Participates in cysteine desulfuration mediated by SufS. Cysteine desulfuration mobilizes sulfur from L-cysteine to yield L-alanine and constitutes an essential step in sulfur metabolism for biosynthesis of a variety of sulfur-containing biomolecules. Functions as a sulfur acceptor for SufS, by mediating the direct transfer of the sulfur atom from the S-sulfanylcysteine of SufS, an intermediate product of cysteine desulfuration process. The protein is Cysteine desulfuration protein SufE of Pectobacterium carotovorum subsp. carotovorum (strain PC1).